Here is a 235-residue protein sequence, read N- to C-terminus: Urease accessory protein UreF (235 aa).

It belongs to the UreF family. As to quaternary structure, ureD, UreF and UreG form a complex that acts as a GTP-hydrolysis-dependent molecular chaperone, activating the urease apoprotein by helping to assemble the nickel containing metallocenter of UreC. The UreE protein probably delivers the nickel.

The protein resides in the cytoplasm. Functionally, required for maturation of urease via the functional incorporation of the urease nickel metallocenter. This chain is Urease accessory protein UreF, found in Haemophilus influenzae (strain PittEE).